The following is a 96-amino-acid chain: Small ribosomal subunit protein bS6 (96 aa).

Belongs to the bacterial ribosomal protein bS6 family.

In terms of biological role, binds together with bS18 to 16S ribosomal RNA. The polypeptide is Small ribosomal subunit protein bS6 (Bacillus cereus (strain G9842)).